The primary structure comprises 450 residues: Bifunctional protein GlmU (450 aa).

The tract at residues 1 to 221 is pyrophosphorylase; sequence MRCIVLAAGM…SCEFIGINNR (221 aa). Residues 6–9, K20, Q69, 74–75, 96–98, G135, E150, N165, and N219 contribute to the UDP-N-acetyl-alpha-D-glucosamine site; these read LAAG, GT, and YGD. Position 98 (D98) interacts with Mg(2+). N219 is a Mg(2+) binding site. Residues 222-242 form a linker region; that stretch reads IQLAQAEKFRRQWILEELMIK. The N-acetyltransferase stretch occupies residues 243–450; sequence GVTIVDPETT…VIDKRKKEED (208 aa). Residues R324 and K342 each coordinate UDP-N-acetyl-alpha-D-glucosamine. Catalysis depends on H354, which acts as the Proton acceptor. UDP-N-acetyl-alpha-D-glucosamine is bound by residues Y357 and N368. 4 residues coordinate acetyl-CoA: A371, S396, A414, and R431.

It in the N-terminal section; belongs to the N-acetylglucosamine-1-phosphate uridyltransferase family. The protein in the C-terminal section; belongs to the transferase hexapeptide repeat family. Homotrimer. Requires Mg(2+) as cofactor.

The protein resides in the cytoplasm. It carries out the reaction alpha-D-glucosamine 1-phosphate + acetyl-CoA = N-acetyl-alpha-D-glucosamine 1-phosphate + CoA + H(+). It catalyses the reaction N-acetyl-alpha-D-glucosamine 1-phosphate + UTP + H(+) = UDP-N-acetyl-alpha-D-glucosamine + diphosphate. It participates in nucleotide-sugar biosynthesis; UDP-N-acetyl-alpha-D-glucosamine biosynthesis; N-acetyl-alpha-D-glucosamine 1-phosphate from alpha-D-glucosamine 6-phosphate (route II): step 2/2. Its pathway is nucleotide-sugar biosynthesis; UDP-N-acetyl-alpha-D-glucosamine biosynthesis; UDP-N-acetyl-alpha-D-glucosamine from N-acetyl-alpha-D-glucosamine 1-phosphate: step 1/1. The protein operates within bacterial outer membrane biogenesis; LPS lipid A biosynthesis. Catalyzes the last two sequential reactions in the de novo biosynthetic pathway for UDP-N-acetylglucosamine (UDP-GlcNAc). The C-terminal domain catalyzes the transfer of acetyl group from acetyl coenzyme A to glucosamine-1-phosphate (GlcN-1-P) to produce N-acetylglucosamine-1-phosphate (GlcNAc-1-P), which is converted into UDP-GlcNAc by the transfer of uridine 5-monophosphate (from uridine 5-triphosphate), a reaction catalyzed by the N-terminal domain. This chain is Bifunctional protein GlmU, found in Pseudothermotoga lettingae (strain ATCC BAA-301 / DSM 14385 / NBRC 107922 / TMO) (Thermotoga lettingae).